Reading from the N-terminus, the 440-residue chain is MSLSNKTVKELRQLLKERYTVEDELTESIALSSMRFKPSQEPEFHALSQSSLLKTKLKQQSSTDIPSYTHVLISKLSCEKITHYAVRGGNIEIMGILMGFTLKDNIVVMDCFNLPVVGTETRVNAQLESYEYMVQYIDEMYNHNDGGDGRDYKGAKLNVVGWFHSHPGYDCWLSNIDIQTQDLNQRFQDPYVAIVVDPLKSLEDKILRMGAFRTIESKSDDNSATSYYELETIIFDSELNRALFETKLNLHCVIEDDESEQISLNRLIDSMKQYSYLMDSKNVRTRIKLATTSERVSNENKKNIDYQNRSTRSQFCLNTQRGDSTETSSFGSMFSGDNTSDVDMEDRNLTEFDSTDTSLCINGEPSIHVNRVERSSRSTDNFHNSKKRMNSNQEKCHDEGNDMLQRNVLETDYARAKNRILASKIKQYERLRFYKDTFTL.

Residues 71-218 (VLISKLSCEK…MGAFRTIESK (148 aa)) form the MPN domain. Zn(2+) is bound by residues histidine 164, histidine 166, and aspartate 177. The short motif at 164-177 (HSHPGYDCWLSNID) is the JAMM motif element. Residues 319 to 341 (TQRGDSTETSSFGSMFSGDNTSD) show a composition bias toward polar residues. 2 disordered regions span residues 319 to 343 (TQRGDSTETSSFGSMFSGDNTSDVD) and 376 to 400 (SRSTDNFHNSKKRMNSNQEKCHDEG).

The protein belongs to the peptidase M67A family. CSN5 subfamily. In terms of assembly, component of a COP9 signalosome-like (CSN) complex, composed of at least RRI1/CSN5, CSN9, RRI2/CSN10, PCI8/CSN11, CSN12 and CSI1. Within this complex it probably interacts directly with CSN12. Also interacts with RPN5. The cofactor is a divalent metal cation.

It localises to the cytoplasm. It is found in the nucleus. In terms of biological role, catalytic component of the COP9 signalosome (CSN) complex that acts as an regulator of the ubiquitin (Ubl) conjugation pathway by mediating the deneddylation of the cullin subunit of SCF-type E3 ubiquitin-protein ligase complexes. The CSN complex is involved in the regulation of the mating pheromone response. The sequence is that of COP9 signalosome complex subunit 5 (RRI1) from Saccharomyces cerevisiae (strain YJM789) (Baker's yeast).